The primary structure comprises 204 residues: ATP-dependent Clp protease proteolytic subunit (204 aa).

Ser-102 serves as the catalytic Nucleophile. The active site involves His-127.

Belongs to the peptidase S14 family. As to quaternary structure, fourteen ClpP subunits assemble into 2 heptameric rings which stack back to back to give a disk-like structure with a central cavity, resembling the structure of eukaryotic proteasomes.

The protein resides in the cytoplasm. It carries out the reaction Hydrolysis of proteins to small peptides in the presence of ATP and magnesium. alpha-casein is the usual test substrate. In the absence of ATP, only oligopeptides shorter than five residues are hydrolyzed (such as succinyl-Leu-Tyr-|-NHMec, and Leu-Tyr-Leu-|-Tyr-Trp, in which cleavage of the -Tyr-|-Leu- and -Tyr-|-Trp bonds also occurs).. Its function is as follows. Cleaves peptides in various proteins in a process that requires ATP hydrolysis. Has a chymotrypsin-like activity. Plays a major role in the degradation of misfolded proteins. The polypeptide is ATP-dependent Clp protease proteolytic subunit (Neisseria meningitidis serogroup C (strain 053442)).